The following is a 446-amino-acid chain: GTPase Der (446 aa).

EngA-type G domains lie at 3–168 and 181–354; these read PVIA…YAGQ and IKIA…KAAM. GTP is bound by residues 9–16, 57–61, 120–123, 187–194, 234–238, and 299–302; these read GRPNVGKS, DTGGF, NKAE, DTAGL, and NKWD. One can recognise a KH-like domain in the interval 355-439; that stretch reads SKLPTPKLTR…PLRIEFRSST (85 aa).

This sequence belongs to the TRAFAC class TrmE-Era-EngA-EngB-Septin-like GTPase superfamily. EngA (Der) GTPase family. Associates with the 50S ribosomal subunit.

GTPase that plays an essential role in the late steps of ribosome biogenesis. This chain is GTPase Der, found in Paraburkholderia phymatum (strain DSM 17167 / CIP 108236 / LMG 21445 / STM815) (Burkholderia phymatum).